We begin with the raw amino-acid sequence, 141 residues long: ATP synthase F(0) complex subunit C2, mitochondrial (141 aa).

The N-terminal 66 residues, 1–66 (MFACSKFVST…RSFQTSAISR (66 aa)), are a transit peptide targeting the mitochondrion. The helical transmembrane segment at 82–102 (VGVAGSGAGIGTVFGSLIIGY) threads the bilayer. K109 carries the post-translational modification N6,N6,N6-trimethyllysine. The chain crosses the membrane as a helical span at residues 117-137 (ILGFALSEAMGLFCLMVAFLI).

It belongs to the ATPase C chain family. F-type ATPases have 2 components, CF(1) - the catalytic core - and CF(0) - the membrane proton channel. CF(1) has five subunits: alpha(3), beta(3), gamma(1), delta(1), epsilon(1). CF(0) has three main subunits: a, b and c. Interacts with DNAJC30; interaction is direct. Post-translationally, trimethylated by ATPSCKMT at Lys-109. Methylation is required for proper incorporation of the C subunit into the ATP synthase complex and mitochondrial respiration.

The protein localises to the mitochondrion membrane. Its function is as follows. Mitochondrial membrane ATP synthase (F(1)F(0) ATP synthase or Complex V) produces ATP from ADP in the presence of a proton gradient across the membrane which is generated by electron transport complexes of the respiratory chain. F-type ATPases consist of two structural domains, F(1) - containing the extramembraneous catalytic core and F(0) - containing the membrane proton channel, linked together by a central stalk and a peripheral stalk. During catalysis, ATP synthesis in the catalytic domain of F(1) is coupled via a rotary mechanism of the central stalk subunits to proton translocation. Part of the complex F(0) domain. A homomeric c-ring of probably 10 subunits is part of the complex rotary element. This is ATP synthase F(0) complex subunit C2, mitochondrial from Homo sapiens (Human).